Here is a 451-residue protein sequence, read N- to C-terminus: Phosphoglucosamine mutase (451 aa).

Ser-103 acts as the Phosphoserine intermediate in catalysis. Positions 103, 243, 245, and 247 each coordinate Mg(2+). Ser-103 is subject to Phosphoserine.

It belongs to the phosphohexose mutase family. Mg(2+) serves as cofactor. Activated by phosphorylation.

The catalysed reaction is alpha-D-glucosamine 1-phosphate = D-glucosamine 6-phosphate. Its function is as follows. Catalyzes the conversion of glucosamine-6-phosphate to glucosamine-1-phosphate. The protein is Phosphoglucosamine mutase of Lactobacillus gasseri (strain ATCC 33323 / DSM 20243 / BCRC 14619 / CIP 102991 / JCM 1131 / KCTC 3163 / NCIMB 11718 / NCTC 13722 / AM63).